Here is a 45-residue protein sequence, read N- to C-terminus: Large ribosomal subunit protein bL34 (45 aa).

The tract at residues 1–45 (MTKRTFQPNNRRRARKHGFRARMRTRAGRAILSARRGKNRAELSA) is disordered. The segment covering 10 to 27 (NRRRARKHGFRARMRTRA) has biased composition (basic residues).

The protein belongs to the bacterial ribosomal protein bL34 family.

This chain is Large ribosomal subunit protein bL34, found in Micrococcus luteus (strain ATCC 4698 / DSM 20030 / JCM 1464 / CCM 169 / CCUG 5858 / IAM 1056 / NBRC 3333 / NCIMB 9278 / NCTC 2665 / VKM Ac-2230) (Micrococcus lysodeikticus).